A 435-amino-acid polypeptide reads, in one-letter code: Adenylosuccinate synthetase (435 aa).

GTP-binding positions include 22-28 (GDEGKGK) and 50-52 (GHT). The Proton acceptor role is filled by Asp-23. Residues Asp-23 and Gly-50 each coordinate Mg(2+). IMP contacts are provided by residues 23-26 (DEGK), 48-51 (NAGH), Thr-140, Arg-154, Gln-235, Thr-250, and Arg-314. His-51 (proton donor) is an active-site residue. Residue 310 to 316 (ATTGRKR) participates in substrate binding. Residues Arg-316, 342–344 (KLD), and 424–426 (SVG) each bind GTP.

This sequence belongs to the adenylosuccinate synthetase family. Homodimer. Requires Mg(2+) as cofactor.

It localises to the cytoplasm. The enzyme catalyses IMP + L-aspartate + GTP = N(6)-(1,2-dicarboxyethyl)-AMP + GDP + phosphate + 2 H(+). Its pathway is purine metabolism; AMP biosynthesis via de novo pathway; AMP from IMP: step 1/2. Its function is as follows. Plays an important role in the de novo pathway of purine nucleotide biosynthesis. Catalyzes the first committed step in the biosynthesis of AMP from IMP. The polypeptide is Adenylosuccinate synthetase (Chlorobaculum tepidum (strain ATCC 49652 / DSM 12025 / NBRC 103806 / TLS) (Chlorobium tepidum)).